A 466-amino-acid chain; its full sequence is FAD-dependent monooxygenase dpfgE (466 aa).

An N-terminal signal peptide occupies residues 1–23 (MSQKPFRVIIVGGSVTGLTLAHS). The FAD site is built by Glu35, Gly49, and Arg108. Asn128 and Asn192 each carry an N-linked (GlcNAc...) asparagine glycan. Positions 312 and 325 each coordinate FAD. N-linked (GlcNAc...) asparagine glycosylation occurs at Asn376. The helical transmembrane segment at 443–465 (GVVRNVFFLLAATVIVAWVCRLW) threads the bilayer.

This sequence belongs to the paxM FAD-dependent monooxygenase family. FAD is required as a cofactor.

It is found in the membrane. Its pathway is secondary metabolite biosynthesis; terpenoid biosynthesis. Its function is as follows. FAD-dependent monooxygenase; part of the gene cluster that mediates the biosynthesis of diterpenoid pyrones. The first step of the pathway is the synthesis of the alpha-pyrone moiety by the polyketide synthase dpfgA via condensation of one acetyl-CoA starter unit with 3 malonyl-CoA units and 2 methylations. The alpha-pyrone is then combined with geranylgeranyl pyrophosphate (GGPP) formed by the GGPP synthase dpfgD through the action of the prenyltransferase dpfgC to yield a linear alpha-pyrone diterpenoid. Subsequent steps in the diterpenoid pyrone biosynthetic pathway involve the decalin core formation, which is initiated by the epoxidation of the C10-C11 olefin by the FAD-dependent oxidoreductase dpfgE, and is followed by a cyclization cascade catalyzed by the terpene cyclase dpfgB. The short chain dehydrogenase/reductase dpfgG then oxidizes the 8S hydroxy group to a ketone and the short chain dehydrogenase/reductase dpfgH reduces the ketone to the 8R hydroxy group to yield higginsianin B. Higginsianin B is further methylated by the methyltransferase dpfgI to produce the intermediate named FDDP B. The cytochrome P450 monooxygenase dfgpJ then catalyzes a three-step oxidation at C-27 to generate a carboxylic acid as well as C-26 hydroxylation. Finally, methyltransferase dpfgK methylates the carboxylic acid generated by dpfgJ, yielding the final diterpenoid pyrones from the pathway which were named FDDP D and FDDP E. The polypeptide is FAD-dependent monooxygenase dpfgE (Gibberella zeae (strain ATCC MYA-4620 / CBS 123657 / FGSC 9075 / NRRL 31084 / PH-1) (Wheat head blight fungus)).